Consider the following 152-residue polypeptide: Transcriptional repressor NrdR (152 aa).

A zinc finger lies at 3 to 34 (CPYCSYNESKVVDSRSTEDSISIRRRRECLEC). Positions 49-139 (ILVIKKNLNR…VYRQFKDINT (91 aa)) constitute an ATP-cone domain.

It belongs to the NrdR family. Zn(2+) is required as a cofactor.

In terms of biological role, negatively regulates transcription of bacterial ribonucleotide reductase nrd genes and operons by binding to NrdR-boxes. This is Transcriptional repressor NrdR from Clostridium tetani (strain Massachusetts / E88).